The sequence spans 1199 residues: Metabotropic glutamate receptor 1 (1199 aa).

Positions 1–20 are cleaved as a signal peptide; it reads MVRLLLIFFPMIFLEMSILP. Topologically, residues 21 to 592 are extracellular; the sequence is RMPDRKVLLA…IRYLEWSDIE (572 aa). Cysteine 67 and cysteine 109 form a disulfide bridge. L-glutamate is bound at residue tyrosine 74. Asparagine 98 carries N-linked (GlcNAc...) asparagine glycosylation. Residues serine 165 and 186-188 each bind L-glutamate; that span reads SAT. A glycan (N-linked (GlcNAc...) asparagine) is linked at asparagine 223. L-glutamate is bound at residue tyrosine 236. A disulfide bond links cysteine 289 and cysteine 291. Aspartate 318 lines the L-glutamate pocket. A disulfide bond links cysteine 378 and cysteine 394. N-linked (GlcNAc...) asparagine glycosylation occurs at asparagine 397. An L-glutamate-binding site is contributed by lysine 409. Cysteines 432 and 439 form a disulfide. A glycan (N-linked (GlcNAc...) asparagine) is linked at asparagine 515. The chain crosses the membrane as a helical span at residues 593–615; the sequence is SIIAIAFSCLGILVTLFVTLIFV. Residues 616–629 are Cytoplasmic-facing; that stretch reads LYRDTPVVKSSSRE. Residues 630-650 form a helical membrane-spanning segment; it reads LCYIILAGIFLGYVCPFTLIA. The Extracellular segment spans residues 651–658; it reads KPTTTSCY. Cysteines 657 and 746 form a disulfide. A helical membrane pass occupies residues 659-680; sequence LQRLLVGLSSAMCYSALVTKTN. At 681 to 703 the chain is on the cytoplasmic side; it reads RIARILAGSKKKICTRKPRFMSA. The chain crosses the membrane as a helical span at residues 704-727; sequence WAQVIIASILISVQLTLVVTLIIM. The Extracellular portion of the chain corresponds to 728-750; that stretch reads EPPMPILSYPSIKEVYLICNTSN. Asparagine 747 carries an N-linked (GlcNAc...) asparagine glycan. A helical membrane pass occupies residues 751 to 772; that stretch reads LGVVAPVGYNGLLIMSCTYYAF. At 773–785 the chain is on the cytoplasmic side; it reads KTRNVPANFNEAK. A helical transmembrane segment spans residues 786–807; the sequence is YIAFTMYTTCIIWLAFVPIYFG. The Extracellular portion of the chain corresponds to 808–815; that stretch reads SNYKIITT. Residues 816-840 form a helical membrane-spanning segment; sequence CFAVSLSVTVALGCMFTPKMYIIIA. Residues 841 to 1199 lie on the Cytoplasmic side of the membrane; it reads KPERNVRSAF…RDYKQSSSTL (359 aa). Position 853 is a phosphoserine (serine 853). The residue at position 871 (threonine 871) is a Phosphothreonine. Disordered stretches follow at residues 882-906, 959-1035, and 1055-1082; these read GAGNANSNGKSVSWSEPGGRQAPKG, EEDN…QPKS, and HAVLAGPGTPGNGLRSLYPPPPPPQHLQ. The segment covering 885 to 895 has biased composition (polar residues); the sequence is NANSNGKSVSW. A phosphoserine mark is found at serine 894 and serine 969. The span at 1012–1032 shows a compositional bias: pro residues; the sequence is GLPPPLPQQQQQPPPQPPPQQ. Phosphoserine is present on serine 1097. Positions 1118–1177 are disordered; the sequence is VYEREGNTEEDDLEEEEDLPAASKLTPEDSPALTPPSPFRDSVASGSSVPSSPVSESVLC. Positions 1125–1136 are enriched in acidic residues; the sequence is TEEDDLEEEEDL. Phosphoserine is present on serine 1147. Residue threonine 1151 is modified to Phosphothreonine. Position 1154 is a phosphoserine (serine 1154). Residues 1159–1175 show a composition bias toward low complexity; the sequence is SVASGSSVPSSPVSESV.

Belongs to the G-protein coupled receptor 3 family. As to quaternary structure, homodimer; disulfide-linked. The PPXXF motif binds HOMER1, HOMER2 and HOMER3. Interacts with TAMALIN. Interacts with RYR1, RYR2, ITPR1, SHANK1 and SHANK3. Interacts with SHIA1. Expressed in the striatum (at protein level). Expressed in type II unipolar brush cells of the cerebellum (at protein level).

Its subcellular location is the cell membrane. The protein resides in the postsynaptic cell membrane. It is found in the cell projection. The protein localises to the dendrite. Functionally, G-protein coupled receptor for glutamate. Ligand binding causes a conformation change that triggers signaling via guanine nucleotide-binding proteins (G proteins) and modulates the activity of down-stream effectors. Signaling activates a phosphatidylinositol-calcium second messenger system. May participate in the central action of glutamate in the CNS, such as long-term potentiation in the hippocampus and long-term depression in the cerebellum (By. similarity). May function in the light response in the retina. Induces GRID1 and GRID2 cation-channel activation via GNAQ-PLC-PKC pathway in dopaminergic neurons and cerebellar Purkinje cell, respectively. The polypeptide is Metabotropic glutamate receptor 1 (Grm1) (Mus musculus (Mouse)).